The primary structure comprises 412 residues: Peptidase T (412 aa).

Residue His84 participates in Zn(2+) binding. The active site involves Asp86. Asp146 lines the Zn(2+) pocket. Catalysis depends on Glu179, which acts as the Proton acceptor. The Zn(2+) site is built by Glu180, Asp202, and His385.

The protein belongs to the peptidase M20B family. The cofactor is Zn(2+).

The protein localises to the cytoplasm. It carries out the reaction Release of the N-terminal residue from a tripeptide.. In terms of biological role, cleaves the N-terminal amino acid of tripeptides. The sequence is that of Peptidase T from Haemophilus influenzae (strain 86-028NP).